The chain runs to 354 residues: UDP-galactose transporter homolog 1 (354 aa).

5 consecutive transmembrane segments (helical) span residues 6–26, 54–74, 95–112, 123–143, and 148–168; these read GGSIITLAACILGLYASFLTW, LVINIIQAFFASIVGLIYSVV, FFKSFVIISLTSSLSSPL, LAYLLAKSCKLIPVMLVHFVL, and FPLYKCMVAGSVTVGVIIFTL. Residue asparagine 202 is glycosylated (N-linked (GlcNAc...) asparagine). The next 4 helical transmembrane spans lie at 227–247, 268–288, 295–317, and 321–340; these read YLMCILNAFIFINTLAYALIF, MNILEFAILGSVGQVFVFIIL, ILITSTVTRKMISMILSVVLFGH, and GLQWGGVGLVFGGIGYEALV.

Belongs to the nucleotide-sugar transporter family. SLC35B subfamily.

It is found in the endoplasmic reticulum membrane. May be involved in specific transport of UDP-Gal from the cytosol to the Golgi lumen. Involved in the maintenance of optimal conditions for the folding of secretory pathway proteins in the endoplasmic reticulum. This is UDP-galactose transporter homolog 1 (HUT1) from Debaryomyces hansenii (strain ATCC 36239 / CBS 767 / BCRC 21394 / JCM 1990 / NBRC 0083 / IGC 2968) (Yeast).